Consider the following 448-residue polypeptide: Glutamyl-tRNA(Gln) amidotransferase subunit D (448 aa).

In terms of domain architecture, Asparaginase/glutaminase spans 92 to 423 (SEVKIISTGG…DKIRSLMLTN (332 aa)). Residues threonine 102, threonine 178, aspartate 179, and lysine 257 contribute to the active site.

This sequence belongs to the asparaginase 1 family. GatD subfamily. As to quaternary structure, heterodimer of GatD and GatE.

It catalyses the reaction L-glutamyl-tRNA(Gln) + L-glutamine + ATP + H2O = L-glutaminyl-tRNA(Gln) + L-glutamate + ADP + phosphate + H(+). Functionally, allows the formation of correctly charged Gln-tRNA(Gln) through the transamidation of misacylated Glu-tRNA(Gln) in organisms which lack glutaminyl-tRNA synthetase. The reaction takes place in the presence of glutamine and ATP through an activated gamma-phospho-Glu-tRNA(Gln). The GatDE system is specific for glutamate and does not act on aspartate. This is Glutamyl-tRNA(Gln) amidotransferase subunit D from Sulfurisphaera tokodaii (strain DSM 16993 / JCM 10545 / NBRC 100140 / 7) (Sulfolobus tokodaii).